Here is a 172-residue protein sequence, read N- to C-terminus: Co-chaperone protein HscB homolog (172 aa).

The region spanning 2-69 (NHFELFNLPV…DSRAAYLLAL (68 aa)) is the J domain.

Belongs to the HscB family. Interacts with HscA and stimulates its ATPase activity.

In terms of biological role, co-chaperone involved in the maturation of iron-sulfur cluster-containing proteins. Seems to help targeting proteins to be folded toward HscA. In Acinetobacter baumannii (strain AB307-0294), this protein is Co-chaperone protein HscB homolog.